The sequence spans 145 residues: MSKIRQLLNKIPWYTDQVHSIFMYLIMGGFTTIINIVTFWLCTYILNWDYRIANTIAFIASVLFAYFSNKKFVFDSYTPTWKDRLREASSFFGFRCLTYIIDILVMILLISYLSVDELWAKIWTNIIVLVLNYVFSKWIIFKVQK.

4 consecutive transmembrane segments (helical) span residues 21–41, 45–65, 91–111, and 122–142; these read IFMY…TFWL, ILNW…VLFA, FFGF…LLIS, and IWTN…IIFK.

This sequence belongs to the GtrA family.

It localises to the cell membrane. In terms of biological role, involved in the decoration of cell wall teichoic acid with galactose and glucose. The polypeptide is Cell wall teichoic acid glycosylation protein GtcA (gtcA) (Listeria monocytogenes).